A 96-amino-acid polypeptide reads, in one-letter code: Putative pterin-4-alpha-carbinolamine dehydratase (96 aa).

The protein belongs to the pterin-4-alpha-carbinolamine dehydratase family.

It carries out the reaction (4aS,6R)-4a-hydroxy-L-erythro-5,6,7,8-tetrahydrobiopterin = (6R)-L-erythro-6,7-dihydrobiopterin + H2O. The protein is Putative pterin-4-alpha-carbinolamine dehydratase of Novosphingobium aromaticivorans (strain ATCC 700278 / DSM 12444 / CCUG 56034 / CIP 105152 / NBRC 16084 / F199).